A 248-amino-acid chain; its full sequence is GPN-loop GTPase PAB0955 (248 aa).

10–15 (GSGKTT) provides a ligand contact to GTP. A Gly-Pro-Asn (GPN)-loop; involved in dimer interface motif is present at residues 65–67 (GPN). GTP is bound by residues 165–168 (NKVD) and Ala-224.

Belongs to the GPN-loop GTPase family. As to quaternary structure, homodimer. Interacts with DNA topoisomerase VI subunit B (top6B), DNA primase DnaG and RF-C.

In terms of biological role, small GTPase that may be involved in genome maintenance. Has weak intrinsic GTPase activity but displays no ATPase activity. In Pyrococcus abyssi (strain GE5 / Orsay), this protein is GPN-loop GTPase PAB0955.